Consider the following 122-residue polypeptide: Biogenesis of lysosome-related organelles complex 1 subunit BLS1 (122 aa).

Serine 33 carries the phosphoserine modification.

It belongs to the BLOC1S1 family. In terms of assembly, component of the biogenesis of lysosome-related organelles complex-1 (BLOC-1) composed of at least BLI1, BLS1, CNL1, KXD1, SNN1 and VAB2.

Its subcellular location is the endosome. Component of the biogenesis of lysosome-related organelles complex-1 (BLOC-1), a complex involved in endosomal cargo sorting. This Saccharomyces cerevisiae (strain RM11-1a) (Baker's yeast) protein is Biogenesis of lysosome-related organelles complex 1 subunit BLS1 (BLS1).